Consider the following 329-residue polypeptide: G-protein coupled receptor 3 (329 aa).

Topologically, residues 1 to 43 (MMWGAGRSMAWFSAGSGSVNVSIDPAEEPTGPATLLPSPRAWD) are extracellular. The N-linked (GlcNAc...) asparagine glycan is linked to Asn20. Residues 44–64 (VVLCISGTLVSCENALVVAII) traverse the membrane as a helical segment. Over 65–73 (VGTPAFRAP) the chain is Cytoplasmic. Residues 74-94 (MFLLVGSLAVADLLAGLGLVL) form a helical membrane-spanning segment. Topologically, residues 95-108 (HFAADFCIGSPEMS) are extracellular. The chain crosses the membrane as a helical span at residues 109-129 (LVLVGVLATAFTASIGSLLAI). Residues 130-153 (TVDRYLSLYNALTYYSETTVTRTY) are Cytoplasmic-facing. The chain crosses the membrane as a helical span at residues 154–174 (VMLALVWVGALGLGLVPVLAW). Residues 175-192 (NCRDGLTTCGVVYPLSKN) are Extracellular-facing. Residues 193-213 (HLVVLAIVFFMVFGIMLQLYA) form a helical membrane-spanning segment. Over 214 to 247 (QICRIVCRHAQQIALQRHLLPASHYVATRKGIAT) the chain is Cytoplasmic. Residues 248–268 (LAVVLGAFAACWLPFTVYCLL) form a helical membrane-spanning segment. The Extracellular portion of the chain corresponds to 269 to 277 (GDANSPPLY). The helical transmembrane segment at 278–298 (TYLTLLPATYNSMINPVIYAF) threads the bilayer. The Cytoplasmic segment spans residues 299–329 (RNQDVQKVLWAICCCCSTSKIPFRSRSPSDV). Cys312 carries S-palmitoyl cysteine lipidation. Ser323, Ser325, and Ser327 each carry phosphoserine.

The protein belongs to the G-protein coupled receptor 1 family. As to expression, abundantly expressed in granule neurons at all development stages. Enriched in the longest tips of neurites during differentiation of hippocampal neurons.

Its subcellular location is the cell membrane. Its function is as follows. Constitutively active G-protein coupled receptor that maintains high 3'-5'-cyclic adenosine monophosphate (cAMP) levels that a plays a role in serveral processes including meiotic arrest in oocytes or neuronal development via activation of numerous intracellular signaling pathways. Acts as an essential activator of thermogenic adipocytes and drives thermogenesis via its intrinsic G(s)-coupling activity without the requirement of a ligand. Has a potential role in modulating a number of brain functions, including behavioral responses to stress, amyloid-beta peptide generation in neurons. Stimulates neurite outgrowth in cerebellar granular neurons modulated via PKA, ERK, and most strongly PI3K-mediated signaling pathways. The polypeptide is G-protein coupled receptor 3 (Gpr3) (Rattus norvegicus (Rat)).